The primary structure comprises 131 residues: Ribosome-binding factor A (131 aa).

The protein belongs to the RbfA family. Monomer. Binds 30S ribosomal subunits, but not 50S ribosomal subunits or 70S ribosomes.

The protein localises to the cytoplasm. Its function is as follows. One of several proteins that assist in the late maturation steps of the functional core of the 30S ribosomal subunit. Associates with free 30S ribosomal subunits (but not with 30S subunits that are part of 70S ribosomes or polysomes). Required for efficient processing of 16S rRNA. May interact with the 5'-terminal helix region of 16S rRNA. The protein is Ribosome-binding factor A of Picosynechococcus sp. (strain ATCC 27264 / PCC 7002 / PR-6) (Agmenellum quadruplicatum).